The following is a 265-amino-acid chain: Energy-coupling factor transporter transmembrane protein EcfT (265 aa).

6 consecutive transmembrane segments (helical) span residues 26–46 (MVFVFIMMILIFLMNNWQTYA), 47–67 (VGIILIFIILKASNLSFMFLF), 72–92 (PILFLLIFTLLMHIFLTKGGA), 107–127 (VIMGIMISLRFILIIFLTTIM), 152–172 (LPVHELALMMSIALRFIPTLM), and 243–263 (HTYDTLSLLTLIPITLLILYL).

Belongs to the energy-coupling factor EcfT family. In terms of assembly, forms a stable energy-coupling factor (ECF) transporter complex composed of 2 membrane-embedded substrate-binding proteins (S component), 2 ATP-binding proteins (A component) and 2 transmembrane proteins (T component). May be able to interact with more than 1 S component at a time.

It is found in the cell membrane. Its function is as follows. Transmembrane (T) component of an energy-coupling factor (ECF) ABC-transporter complex. Unlike classic ABC transporters this ECF transporter provides the energy necessary to transport a number of different substrates. The chain is Energy-coupling factor transporter transmembrane protein EcfT from Macrococcus caseolyticus (strain JCSC5402) (Macrococcoides caseolyticum).